Reading from the N-terminus, the 226-residue chain is UPF0173 metal-dependent hydrolase SRU_1937 (226 aa).

It belongs to the UPF0173 family.

The sequence is that of UPF0173 metal-dependent hydrolase SRU_1937 from Salinibacter ruber (strain DSM 13855 / M31).